Consider the following 241-residue polypeptide: 1-(5-phosphoribosyl)-5-[(5-phosphoribosylamino)methylideneamino] imidazole-4-carboxamide isomerase (241 aa).

D8 (proton acceptor) is an active-site residue. The active-site Proton donor is the D130.

The protein belongs to the HisA/HisF family.

It localises to the cytoplasm. The catalysed reaction is 1-(5-phospho-beta-D-ribosyl)-5-[(5-phospho-beta-D-ribosylamino)methylideneamino]imidazole-4-carboxamide = 5-[(5-phospho-1-deoxy-D-ribulos-1-ylimino)methylamino]-1-(5-phospho-beta-D-ribosyl)imidazole-4-carboxamide. Its pathway is amino-acid biosynthesis; L-histidine biosynthesis; L-histidine from 5-phospho-alpha-D-ribose 1-diphosphate: step 4/9. In Leptospira borgpetersenii serovar Hardjo-bovis (strain JB197), this protein is 1-(5-phosphoribosyl)-5-[(5-phosphoribosylamino)methylideneamino] imidazole-4-carboxamide isomerase.